The primary structure comprises 305 residues: Putative F-box protein PP2-B8 (305 aa).

In terms of domain architecture, F-box spans 33 to 79 (VAELDDLPEECVSIIVSFTSPQDACVLASVSKTFASAVKSDIVWEKF).

In Arabidopsis thaliana (Mouse-ear cress), this protein is Putative F-box protein PP2-B8 (PP2B8).